The chain runs to 146 residues: Aminoglycoside N(6')-acetyltransferase type 1 (146 aa).

The N-acetyltransferase domain occupies M1–G146. 4 residues coordinate substrate: W22, H25, Y66, and E79. Acetyl-CoA is bound at residue I81–V83. D115 serves as a coordination point for substrate. An acetyl-CoA-binding site is contributed by N120. E136 is a substrate binding site.

Homodimer.

The catalysed reaction is kanamycin B + acetyl-CoA = N(6')-acetylkanamycin B + CoA + H(+). Functionally, catalyzes the transfer of an acetyl group from acetyl-CoA to the 6'-amino group of aminoglycoside molecules conferring resistance to antibiotics containing the purpurosamine ring including amikacin, kanamycin, tobramycin and netilmicin. The chain is Aminoglycoside N(6')-acetyltransferase type 1 from Acinetobacter baumannii.